A 393-amino-acid chain; its full sequence is Probable protein phosphatase 2C 72 (393 aa).

Residues 49 to 357 (EFSMAVVQAN…DDITVVVVFF (309 aa)) enclose the PPM-type phosphatase domain. 2 residues coordinate Mn(2+): Asp-88 and Gly-89. The helical transmembrane segment at 147–167 (LAAVGSCCLVGVICAGNLYIA) threads the bilayer. Mn(2+) contacts are provided by Asp-289 and Asp-348.

This sequence belongs to the PP2C family. Mg(2+) serves as cofactor. Requires Mn(2+) as cofactor.

The protein resides in the membrane. The catalysed reaction is O-phospho-L-seryl-[protein] + H2O = L-seryl-[protein] + phosphate. The enzyme catalyses O-phospho-L-threonyl-[protein] + H2O = L-threonyl-[protein] + phosphate. The protein is Probable protein phosphatase 2C 72 of Oryza sativa subsp. japonica (Rice).